Reading from the N-terminus, the 488-residue chain is MKSYIAVDIGASSGRLMLGQQKRGQLTLKEVHRFSNGFAMKDGHDRWDVDHLIHEIFKGLEKVKKMGIKDVELGIDTWAVDYVLVGENGHKLEDPISYRDKRTHNAIQQLTSDLPKEYIYEKTGIQFQDFNTLYQLYKENHDLLAKTDKIMMMPDYLGYVLTGNAVTEITNASTTQMLNLRVGLFDKDLLGKVNVSQDQFPRLVESGSVLGNVSHKWHTQYDIPEVEVVTVATHDTASAVVGTPGEGDRWAFLSSGTWSLLGTELNVPENGLQAFHENYTNEWGAYGTYRFLKNIMGLWVAQCVRHELGDQYSFGELADLAQQVRPFQQFIDINDERFTNPENMIKELQDYCRETKQTIPETPGELFQAIYSNLSLFYANELNKLDRILGYHIDTLNIVGGGSNVALMNQLTSTLANIKVVAGPSEATAVGNIMVQMITSDEVENIGAGRRLIETSFDLKRYLPETNKYGDILKEYQRFLTNKSKEMV.

ATP is bound at residue 11 to 15; that stretch reads ASSGR. Substrate-binding positions include Ala-79 and 234 to 236; that span reads HDT. Asp-235 (proton acceptor) is an active-site residue. Thr-257 contacts ATP. Asn-294 is a binding site for substrate. 2 residues coordinate ATP: Gln-302 and Gly-401.

Belongs to the rhamnulokinase family. It depends on Mg(2+) as a cofactor.

It catalyses the reaction L-rhamnulose + ATP = L-rhamnulose 1-phosphate + ADP + H(+). It functions in the pathway carbohydrate degradation; L-rhamnose degradation; glycerone phosphate from L-rhamnose: step 2/3. Involved in the catabolism of L-rhamnose (6-deoxy-L-mannose). Catalyzes the transfer of the gamma-phosphate group from ATP to the 1-hydroxyl group of L-rhamnulose to yield L-rhamnulose 1-phosphate. The polypeptide is Rhamnulokinase (Lactiplantibacillus plantarum (strain ATCC BAA-793 / NCIMB 8826 / WCFS1) (Lactobacillus plantarum)).